We begin with the raw amino-acid sequence, 558 residues long: Aurovertin biosynthesis cluster transcription factor aurF (558 aa).

Belongs to the POU transcription factor family. Class-3 subfamily.

It is found in the nucleus. In terms of biological role, transcription factor that regulates the expression of the gene cluster that mediates the biosynthesis of aurovertins, fungal polyketides that exhibit potent inhibition of adenosine triphosphate synthase. This is Aurovertin biosynthesis cluster transcription factor aurF from Calcarisporium arbuscula (Dendryphion arbuscula).